The chain runs to 658 residues: uncharacterized protein (658 aa).

The segment covering 516–639 (SSNNSNSSNN…NNNNNSSQGG (124 aa)) has biased composition (low complexity). The disordered stretch occupies residues 516 to 646 (SSNNSNSSNN…QGGNSQGGSG (131 aa)).

The protein localises to the cytoplasm. This is an uncharacterized protein from Schizosaccharomyces pombe (strain 972 / ATCC 24843) (Fission yeast).